Consider the following 162-residue polypeptide: UPF0114 protein PST_0950 (162 aa).

3 helical membrane-spanning segments follow: residues Leu-15 to Phe-35, Leu-53 to Val-73, and Leu-136 to Met-156.

Belongs to the UPF0114 family.

The protein resides in the cell membrane. This chain is UPF0114 protein PST_0950, found in Stutzerimonas stutzeri (strain A1501) (Pseudomonas stutzeri).